Reading from the N-terminus, the 839-residue chain is Probable beta-glucosidase I (839 aa).

N197 carries an N-linked (GlcNAc...) asparagine glycan. D225 is an active-site residue. Positions 395-555 constitute a PA14 domain; sequence DGKTGFSFKV…GQEELISNAV (161 aa). N620 is a glycosylation site (N-linked (GlcNAc...) asparagine).

Belongs to the glycosyl hydrolase 3 family.

It is found in the secreted. The catalysed reaction is Hydrolysis of terminal, non-reducing beta-D-glucosyl residues with release of beta-D-glucose.. Its pathway is glycan metabolism; cellulose degradation. Functionally, beta-glucosidases are one of a number of cellulolytic enzymes involved in the degradation of cellulosic biomass. Catalyzes the last step releasing glucose from the inhibitory cellobiose. The sequence is that of Probable beta-glucosidase I (bglI) from Aspergillus oryzae (strain ATCC 42149 / RIB 40) (Yellow koji mold).